The following is a 491-amino-acid chain: MEQPPAPKSKLKKLSEDSLTKQPEEVFDVLEKLGEGSYGSVFKAIHKESGQVVAIKQVPVESDVQEIIKEISIMQQCDSPYVVKYYGSYFKNTDLWIVMEYCGAGSVSDIIRLRNKTLTEDEIATILKSTLKGLEYLHFMRKIHRDIKAGNILLNTEGHAKLADFGVAGQLTDTMAKRNTVIGTPFWMAPEVIQEIGYNCVADIWSLGITSIEMAEGKPPYADIHPMRAIFMIPTNPPPTFRKPELWSDDFTDFVKKCLVKSPEQRATATQLLQHPFIKNAKPVSILRELITEGMEIKAKRHEEQQRELEDEEENSDEDELDSHTMVKTSSEGVGTMRATSTMSEGAQTMIEHNSTMLESDLGTMVINSEDEEEEDGTMKRNATSPQVQRPSFMDYFDKQDFKNKSHENCDQSMREPCPMSNNVFPDNWRVPQDGDFDFLKNLSLEELQMRLKALDPMMEREIEELHQRYSAKRQPILDAMDAKKRRQQNF.

Met1 bears the N-acetylmethionine mark. Ser15 bears the Phosphoserine mark. Residues Phe27 to Ile278 enclose the Protein kinase domain. ATP-binding positions include Leu33–Val41 and Lys56. Phosphothreonine; by PKB/AKT1 is present on Thr117. Catalysis depends on Asp146, which acts as the Proton acceptor. Mg(2+)-binding residues include Asn151 and Asp164. A Phosphothreonine; by autocatalysis modification is found at Thr180. Residues Ile291–His324 are a coiled coil. Disordered stretches follow at residues Arg301 to Met343 and Glu370 to Ser392. The span at Leu309–Leu321 shows a compositional bias: acidic residues. Residue Ser316 is modified to Phosphoserine. The span at Met326 to Met343 shows a compositional bias: polar residues. Thr336 and Thr378 each carry phosphothreonine. Over residues Arg381–Arg390 the composition is skewed to polar residues. Thr384 carries the post-translational modification Phosphothreonine; by PKB/AKT1. A phosphoserine mark is found at Ser385 and Ser444. The SARAH domain occupies Phe437–Lys484.

The protein belongs to the protein kinase superfamily. STE Ser/Thr protein kinase family. STE20 subfamily. In terms of assembly, homodimer; mediated via the coiled-coil region. Interacts with NORE1, which inhibits autoactivation. Interacts with and stabilizes SAV1. Interacts with RAF1, which prevents dimerization and phosphorylation. Interacts with RASSF1. Interacts (via SARAH domain) with isoform 1 of NEK2. Interacts with ESR1 only in the presence of SAV1. Interacts with PKB/AKT1. Forms a tripartite complex with MOBKL1B and STK38. Interacts with RASSF2 (via SARAH domain). Interacts with DLG5 (via PDZ domain 3). Interacts with LATS1; this interaction is inhibited in the presence of DLG5. Interacts with MARK3 in the presence of DLG5. Interacts with RASSF5; this interaction inhibits STK3 autoactivation through heterodimerization. Interacts (when phosphorylated) with SLMAP (via FHA domain); the interaction associates STK3 with the STRIPAK complex. Mg(2+) serves as cofactor. In terms of processing, autophosphorylated on two residues Thr-174 and Thr-180, leading to activation. Phosphorylation at Thr-117 and Thr-384 by PKB/AKT1, leads to inhibition of its: cleavage, kinase activity, autophosphorylation at Thr-180, binding to RASSF1 and nuclear translocation, and increase in its binding to RAF1. Phosphorylated at Ser-15 by PLK1, leading to activation. Post-translationally, proteolytically cleaved by caspase-3 during apoptosis. Proteolytic cleavage results in kinase activation and nuclear translocation of the truncated form (MST1/N). Ubiquitinated by TRIM69; leading to its redistribution to the perinuclear cytoskeleton.

It localises to the cytoplasm. It is found in the nucleus. The enzyme catalyses L-seryl-[protein] + ATP = O-phospho-L-seryl-[protein] + ADP + H(+). The catalysed reaction is L-threonyl-[protein] + ATP = O-phospho-L-threonyl-[protein] + ADP + H(+). With respect to regulation, inhibited by the C-terminal non-catalytic region. Activated by caspase-cleavage. Full activation also requires homodimerization and autophosphorylation of Thr-180, which are inhibited by the proto-oncogene product RAF1. Activated by RASSF1 which acts by preventing its dephosphorylation. When autophosphorylated at Thr-180, recruits STRIPAK complex and promotes PP2A-mediated dephosphorylation and inactivation of STK3. Stress-activated, pro-apoptotic kinase which, following caspase-cleavage, enters the nucleus and induces chromatin condensation followed by internucleosomal DNA fragmentation. Key component of the Hippo signaling pathway which plays a pivotal role in organ size control and tumor suppression by restricting proliferation and promoting apoptosis. The core of this pathway is composed of a kinase cascade wherein STK3/MST2 and STK4/MST1, in complex with its regulatory protein SAV1, phosphorylates and activates LATS1/2 in complex with its regulatory protein MOB1, which in turn phosphorylates and inactivates YAP1 oncoprotein and WWTR1/TAZ. Phosphorylation of YAP1 by LATS2 inhibits its translocation into the nucleus to regulate cellular genes important for cell proliferation, cell death, and cell migration. STK3/MST2 and STK4/MST1 are required to repress proliferation of mature hepatocytes, to prevent activation of facultative adult liver stem cells (oval cells), and to inhibit tumor formation. Phosphorylates NKX2-1. Phosphorylates NEK2 and plays a role in centrosome disjunction by regulating the localization of NEK2 to centrosomes, and its ability to phosphorylate CROCC and CEP250. In conjunction with SAV1, activates the transcriptional activity of ESR1 through the modulation of its phosphorylation. Positively regulates RAF1 activation via suppression of the inhibitory phosphorylation of RAF1 on 'Ser-259'. Phosphorylates MOBKL1A and RASSF2. Phosphorylates MOBKL1B on 'Thr-74'. Acts cooperatively with MOBKL1B to activate STK38. This is Serine/threonine-protein kinase 3 (Stk3) from Rattus norvegicus (Rat).